We begin with the raw amino-acid sequence, 311 residues long: Ribose-5-phosphate isomerase (311 aa).

The span at 22–32 (AGGAASGGGGN) shows a compositional bias: gly residues. The disordered stretch occupies residues 22 to 67 (AGGAASGGGGNSWDLPGSHVRLPGRAQSGTRGGAGNTSTSCGDSNS). Arg-52 carries the post-translational modification Omega-N-methylarginine. Polar residues predominate over residues 57–67 (NTSTSCGDSNS). The residue at position 106 (Ser-106) is a Phosphoserine.

Belongs to the ribose 5-phosphate isomerase family.

The enzyme catalyses aldehydo-D-ribose 5-phosphate = D-ribulose 5-phosphate. Its pathway is carbohydrate degradation; pentose phosphate pathway; D-ribose 5-phosphate from D-ribulose 5-phosphate (non-oxidative stage): step 1/1. Its function is as follows. Catalyzes the reversible conversion of ribose-5-phosphate to ribulose 5-phosphate and participates in the first step of the non-oxidative branch of the pentose phosphate pathway. The chain is Ribose-5-phosphate isomerase from Homo sapiens (Human).